The chain runs to 149 residues: Arginine repressor (149 aa).

The protein belongs to the ArgR family.

Its subcellular location is the cytoplasm. It participates in amino-acid biosynthesis; L-arginine biosynthesis [regulation]. In terms of biological role, regulates arginine biosynthesis genes. The sequence is that of Arginine repressor from Chlorobium phaeobacteroides (strain DSM 266 / SMG 266 / 2430).